The sequence spans 305 residues: Probable 5-dehydro-4-deoxyglucarate dehydratase (305 aa).

Belongs to the DapA family.

The catalysed reaction is 5-dehydro-4-deoxy-D-glucarate + H(+) = 2,5-dioxopentanoate + CO2 + H2O. It participates in carbohydrate acid metabolism; D-glucarate degradation; 2,5-dioxopentanoate from D-glucarate: step 2/2. The protein is Probable 5-dehydro-4-deoxyglucarate dehydratase of Xanthomonas campestris pv. campestris (strain B100).